Here is a 336-residue protein sequence, read N- to C-terminus: Glycerol-3-phosphate dehydrogenase [NAD(P)+] (336 aa).

Residues Ser-16, Tyr-17, His-37, and Lys-111 each coordinate NADPH. Sn-glycerol 3-phosphate contacts are provided by Lys-111, Gly-140, and Thr-142. Ala-144 lines the NADPH pocket. Lys-196, Asp-249, Ser-259, Arg-260, and Asn-261 together coordinate sn-glycerol 3-phosphate. The active-site Proton acceptor is the Lys-196. Arg-260 is an NADPH binding site. Residues Val-284 and Glu-286 each coordinate NADPH.

The protein belongs to the NAD-dependent glycerol-3-phosphate dehydrogenase family.

The protein localises to the cytoplasm. The catalysed reaction is sn-glycerol 3-phosphate + NAD(+) = dihydroxyacetone phosphate + NADH + H(+). It carries out the reaction sn-glycerol 3-phosphate + NADP(+) = dihydroxyacetone phosphate + NADPH + H(+). The protein operates within membrane lipid metabolism; glycerophospholipid metabolism. Its function is as follows. Catalyzes the reduction of the glycolytic intermediate dihydroxyacetone phosphate (DHAP) to sn-glycerol 3-phosphate (G3P), the key precursor for phospholipid synthesis. This Actinobacillus pleuropneumoniae serotype 3 (strain JL03) protein is Glycerol-3-phosphate dehydrogenase [NAD(P)+].